Reading from the N-terminus, the 271-residue chain is Formamidopyrimidine-DNA glycosylase (271 aa).

Catalysis depends on P2, which acts as the Schiff-base intermediate with DNA. The active-site Proton donor is the E3. The active-site Proton donor; for beta-elimination activity is K58. DNA-binding residues include H91, R110, and R152. An FPG-type zinc finger spans residues 237–271; sequence QIYGRSAHPCPICGTPIRLERIGQRASYYCTQCQH. The Proton donor; for delta-elimination activity role is filled by R261.

It belongs to the FPG family. In terms of assembly, monomer. The cofactor is Zn(2+).

It catalyses the reaction Hydrolysis of DNA containing ring-opened 7-methylguanine residues, releasing 2,6-diamino-4-hydroxy-5-(N-methyl)formamidopyrimidine.. It carries out the reaction 2'-deoxyribonucleotide-(2'-deoxyribose 5'-phosphate)-2'-deoxyribonucleotide-DNA = a 3'-end 2'-deoxyribonucleotide-(2,3-dehydro-2,3-deoxyribose 5'-phosphate)-DNA + a 5'-end 5'-phospho-2'-deoxyribonucleoside-DNA + H(+). Involved in base excision repair of DNA damaged by oxidation or by mutagenic agents. Acts as a DNA glycosylase that recognizes and removes damaged bases. Has a preference for oxidized purines, such as 7,8-dihydro-8-oxoguanine (8-oxoG). Has AP (apurinic/apyrimidinic) lyase activity and introduces nicks in the DNA strand. Cleaves the DNA backbone by beta-delta elimination to generate a single-strand break at the site of the removed base with both 3'- and 5'-phosphates. The sequence is that of Formamidopyrimidine-DNA glycosylase from Nitrosococcus oceani (strain ATCC 19707 / BCRC 17464 / JCM 30415 / NCIMB 11848 / C-107).